Consider the following 100-residue polypeptide: ATP phosphoribosyltransferase (100 aa).

It belongs to the ATP phosphoribosyltransferase family. Long subfamily. In terms of assembly, equilibrium between an active dimeric form, an inactive hexameric form and higher aggregates. Interconversion between the various forms is largely reversible and is influenced by the natural substrates and inhibitors of the enzyme. Mg(2+) is required as a cofactor.

The protein resides in the cytoplasm. The enzyme catalyses 1-(5-phospho-beta-D-ribosyl)-ATP + diphosphate = 5-phospho-alpha-D-ribose 1-diphosphate + ATP. It functions in the pathway amino-acid biosynthesis; L-histidine biosynthesis; L-histidine from 5-phospho-alpha-D-ribose 1-diphosphate: step 1/9. With respect to regulation, feedback inhibited by histidine. Its function is as follows. Catalyzes the condensation of ATP and 5-phosphoribose 1-diphosphate to form N'-(5'-phosphoribosyl)-ATP (PR-ATP). Has a crucial role in the pathway because the rate of histidine biosynthesis seems to be controlled primarily by regulation of HisG enzymatic activity. The chain is ATP phosphoribosyltransferase (hisG) from Klebsiella pneumoniae.